The following is a 336-amino-acid chain: MAMQAHYEAEATEEEHFGPQAISRLEQCGINANDVKKLEEAGFHTVEAVAYAPKKELLNIKGISEAKAEKILAEAAKLVPMGFTTATEFHQRRSEIIQISTGSKELDKLLQGGVETGSITEMFGEFRTGKTQLCHTLAVTCQLPIDRGGGEGKAMYIDTEGTFRPERLLAVAERYGLSGSDVLDNVAYARAFNTDHQTQLLYQASAMMAESRYALLIVDSATALYRTDYSGRGELSARQMHLARFLRMLLRLADEFGVAVVITNQVVAQVDGAAMFAADPKKPIGGNIIAHASTTRLYLRKGRGETRICKIYDSPCLPEAEAMFAINADGVGDAKD.

A HhH domain is found at Thr-45 to Glu-74. An ATP-binding site is contributed by Gly-124–Thr-131. Residues Leu-242–Gly-257 carry the Nuclear export signal motif.

The protein belongs to the RecA family. RAD51 subfamily. In terms of assembly, forms linear homooligomers, giving rise to a RAD51 nucleoprotein filament, which is essential for strand-pairing reactions during DNA recombination.

It localises to the nucleus. Its subcellular location is the cytoplasm. The protein localises to the chromosome. Functionally, plays an important role in homologous strand exchange, a key step in DNA repair through homologous recombination (HR). Binds to single-stranded DNA in an ATP-dependent manner to form nucleoprotein filaments which are essential for the homology search and strand exchange. Catalyzes the recognition of homology and strand exchange between homologous DNA partners to form a joint molecule between a processed DNA break and the repair template. Recruited to resolve stalled replication forks during replication stress. Also involved in interstrand cross-link repair. The protein is DNA repair protein RAD51 homolog A (rad51-a) of Xenopus laevis (African clawed frog).